A 94-amino-acid chain; its full sequence is Conotoxin Im026 (94 aa).

Residues 1 to 24 form the signal peptide; it reads MRLTTMHSVILMLLLVFAFDNVDG. A propeptide spanning residues 25-59 is cleaved from the precursor; that stretch reads DEPGQTARDVDNRNFMSILRSEGKPVHFLRAIKKR.

Post-translationally, contains 4 disulfide bonds. As to expression, expressed by the venom duct.

It localises to the secreted. Probable neurotoxin. This Conus imperialis (Imperial cone) protein is Conotoxin Im026.